We begin with the raw amino-acid sequence, 57 residues long: MKYFVVLVVLALILAITVDPSDAVFIDILDKMENAIHKAAQAGIGLAKPIENMILPK.

The N-terminal stretch at 1-23 (MKYFVVLVVLALILAITVDPSDA) is a signal peptide.

This sequence belongs to the andropin family. As to expression, ejaculatory duct of adult males.

The protein localises to the secreted. Its function is as follows. Male-specific peptide with moderate activity against Gram-positive bacteria. In Drosophila sechellia (Fruit fly), this protein is Andropin (Anp).